The chain runs to 194 residues: Phosphoheptose isomerase (194 aa).

Positions 37–194 (IANSFKQGGK…LIEFEMAKTA (158 aa)) constitute an SIS domain. 52–54 (NGG) contributes to the substrate binding site. The Zn(2+) site is built by H61 and E65. Residues E65, 93–94 (ND), 119–121 (STS), S124, and Q172 each bind substrate. Zn(2+) is bound by residues Q172 and H180.

This sequence belongs to the SIS family. GmhA subfamily. Homotetramer. It depends on Zn(2+) as a cofactor.

Its subcellular location is the cytoplasm. It carries out the reaction 2 D-sedoheptulose 7-phosphate = D-glycero-alpha-D-manno-heptose 7-phosphate + D-glycero-beta-D-manno-heptose 7-phosphate. Its pathway is carbohydrate biosynthesis; D-glycero-D-manno-heptose 7-phosphate biosynthesis; D-glycero-alpha-D-manno-heptose 7-phosphate and D-glycero-beta-D-manno-heptose 7-phosphate from sedoheptulose 7-phosphate: step 1/1. It participates in bacterial outer membrane biogenesis; LOS core biosynthesis. Catalyzes the isomerization of sedoheptulose 7-phosphate in D-glycero-D-manno-heptose 7-phosphate. The protein is Phosphoheptose isomerase of Haemophilus ducreyi (strain 35000HP / ATCC 700724).